We begin with the raw amino-acid sequence, 593 residues long: Serine/threonine-protein kinase SSN3 (593 aa).

Positions 90–489 (YEIIGYIAAG…AIDALDHVYF (400 aa)) constitute a Protein kinase domain. 96 to 104 (IAAGTYGKV) lines the ATP pocket. A disordered region spans residues 161-199 (KPSHKRFTPPNNSNSTQIRSNSGSETNVRINSSSITNNS). Residues 169–185 (PPNNSNSTQIRSNSGSE) show a composition bias toward polar residues. Residues 186 to 199 (TNVRINSSSITNNS) are compositionally biased toward low complexity. K211 contacts ATP. Residue D312 is the Proton acceptor of the active site. Disordered regions lie at residues 517–551 (DNDITNVGNDNNQANHSQKQPMHGNNNNKNGNMNG) and 569–593 (AAVSGNGNNPTSNTATGGSARKKRK). The span at 518–536 (NDITNVGNDNNQANHSQKQ) shows a compositional bias: polar residues. The span at 540–551 (GNNNNKNGNMNG) shows a compositional bias: low complexity. The segment covering 573-585 (GNGNNPTSNTATG) has biased composition (polar residues).

It belongs to the protein kinase superfamily. CMGC Ser/Thr protein kinase family. CDC2/CDKX subfamily. In terms of assembly, component of the SRB8-11 complex, a regulatory module of the Mediator complex. Mg(2+) serves as cofactor.

The protein localises to the nucleus. It catalyses the reaction L-seryl-[protein] + ATP = O-phospho-L-seryl-[protein] + ADP + H(+). The catalysed reaction is L-threonyl-[protein] + ATP = O-phospho-L-threonyl-[protein] + ADP + H(+). The enzyme catalyses [DNA-directed RNA polymerase] + ATP = phospho-[DNA-directed RNA polymerase] + ADP + H(+). Its function is as follows. Component of the SRB8-11 complex. The SRB8-11 complex is a regulatory module of the Mediator complex which is itself involved in regulation of basal and activated RNA polymerase II-dependent transcription. The SRB8-11 complex may be involved in the transcriptional repression of a subset of genes regulated by Mediator. It may inhibit the association of the Mediator complex with RNA polymerase II to form the holoenzyme complex. The SRB8-11 complex phosphorylates the C-terminal domain (CTD) of the largest subunit of RNA polymerase II. This is Serine/threonine-protein kinase SSN3 (SSN3) from Kluyveromyces lactis (strain ATCC 8585 / CBS 2359 / DSM 70799 / NBRC 1267 / NRRL Y-1140 / WM37) (Yeast).